A 294-amino-acid chain; its full sequence is MIAPATLSSRLPLYLRLMRLDKPIGILLLMWPTLWALWLAADGFPPLHLIVIFALGTVLMRSAGCVINDYADRDFDGHVERTRTRPLTTGAVTVREALLLAAGLSLVSFVLILPLDPLVRWLSLPALFLAASYPYTKRFLAIPQAYLGIAFGFGIPMGFAAVQGEVPAIAWLLLLANIFWAVAYDTEYAMVDRPDDLKIGIKTSAITFGRFDVAAVMLCYAVAFGLIAAVGIATGRGPWFFGGIAIAAAIAIYHYTLIRDRDRARCFRAFLHNNWVGAVLFVALVIDYVAFPAA.

8 helical membrane-spanning segments follow: residues 24–44 (IGIL…ADGF), 47–67 (LHLI…GCVI), 99–119 (LLAA…DPLV), 139–159 (FLAI…PMGF), 164–184 (GEVP…AVAY), 213–233 (VAAV…VGIA), 238–258 (PWFF…YTLI), and 274–294 (NWVG…FPAA).

Belongs to the UbiA prenyltransferase family. The cofactor is Mg(2+).

Its subcellular location is the cell inner membrane. The catalysed reaction is all-trans-octaprenyl diphosphate + 4-hydroxybenzoate = 4-hydroxy-3-(all-trans-octaprenyl)benzoate + diphosphate. It participates in cofactor biosynthesis; ubiquinone biosynthesis. Catalyzes the prenylation of para-hydroxybenzoate (PHB) with an all-trans polyprenyl group. Mediates the second step in the final reaction sequence of ubiquinone-8 (UQ-8) biosynthesis, which is the condensation of the polyisoprenoid side chain with PHB, generating the first membrane-bound Q intermediate 3-octaprenyl-4-hydroxybenzoate. The protein is 4-hydroxybenzoate octaprenyltransferase of Aromatoleum aromaticum (strain DSM 19018 / LMG 30748 / EbN1) (Azoarcus sp. (strain EbN1)).